Here is a 219-residue protein sequence, read N- to C-terminus: 2-phospho-L-lactate guanylyltransferase (219 aa).

The protein belongs to the CofC family. Homodimer.

It carries out the reaction (2S)-2-phospholactate + GTP + H(+) = (2S)-lactyl-2-diphospho-5'-guanosine + diphosphate. Its pathway is cofactor biosynthesis; coenzyme F420 biosynthesis. Guanylyltransferase that catalyzes the activation of (2S)-2-phospholactate (2-PL) as (2S)-lactyl-2-diphospho-5'-guanosine, via the condensation of 2-PL with GTP. It is involved in the biosynthesis of coenzyme F420, a hydride carrier cofactor. In Methanocaldococcus vulcanius (strain ATCC 700851 / DSM 12094 / M7) (Methanococcus vulcanius), this protein is 2-phospho-L-lactate guanylyltransferase.